We begin with the raw amino-acid sequence, 515 residues long: Maturase K (515 aa).

Belongs to the intron maturase 2 family. MatK subfamily.

It is found in the plastid. The protein localises to the chloroplast. Usually encoded in the trnK tRNA gene intron. Probably assists in splicing its own and other chloroplast group II introns. The polypeptide is Maturase K (Larix laricina (Tamarack)).